Consider the following 442-residue polypeptide: 3-ketoacyl-CoA thiolase (442 aa).

The active-site Acyl-thioester intermediate is cysteine 105. Residues histidine 398 and cysteine 428 each act as proton acceptor in the active site.

Belongs to the thiolase-like superfamily. Thiolase family. Heterotetramer of two alpha chains (FadJ) and two beta chains (FadI).

The protein localises to the cytoplasm. The catalysed reaction is an acyl-CoA + acetyl-CoA = a 3-oxoacyl-CoA + CoA. It participates in lipid metabolism; fatty acid beta-oxidation. In terms of biological role, catalyzes the final step of fatty acid oxidation in which acetyl-CoA is released and the CoA ester of a fatty acid two carbons shorter is formed. In Aliivibrio fischeri (strain ATCC 700601 / ES114) (Vibrio fischeri), this protein is 3-ketoacyl-CoA thiolase.